Here is a 214-residue protein sequence, read N- to C-terminus: Probable nicotinate-nucleotide adenylyltransferase (214 aa).

The protein belongs to the NadD family.

The catalysed reaction is nicotinate beta-D-ribonucleotide + ATP + H(+) = deamido-NAD(+) + diphosphate. The protein operates within cofactor biosynthesis; NAD(+) biosynthesis; deamido-NAD(+) from nicotinate D-ribonucleotide: step 1/1. Functionally, catalyzes the reversible adenylation of nicotinate mononucleotide (NaMN) to nicotinic acid adenine dinucleotide (NaAD). This is Probable nicotinate-nucleotide adenylyltransferase from Rubrobacter xylanophilus (strain DSM 9941 / JCM 11954 / NBRC 16129 / PRD-1).